The following is a 504-amino-acid chain: TGF-beta-activated kinase 1 and MAP3K7-binding protein 1 (504 aa).

Residues 1-22 are disordered; it reads MAAQRRSLLQSEQQPSWTDDLP. Phosphoserine is present on S7. Polar residues predominate over residues 7–17; sequence SLLQSEQQPSW. The 338-residue stretch at 28-365 folds into the PPM-type phosphatase domain; that stretch reads GVGSASNRSY…EDMTLLVRNF (338 aa). S378 carries the post-translational modification Phosphoserine. O-linked (GlcNAc) serine glycosylation is present at S395. Phosphoserine; by MAPK14 is present on S423. Residues 430 to 439 show a composition bias toward polar residues; it reads ATPTLTNQSP. The disordered stretch occupies residues 430 to 478; sequence ATPTLTNQSPTLTLQSTNTHTQSSSSSSDGGLFRSRPAHSLPPGEDGRV. A Phosphothreonine; by MAPK14 modification is found at T431. A Phosphoserine; by MAPK14 modification is found at S438. Residues 440–457 are compositionally biased toward low complexity; sequence TLTLQSTNTHTQSSSSSS. At T442 the chain carries Phosphothreonine.

As to quaternary structure, interacts with XIAP and BIRC7. Interacts with TRAF6 and MAP3K7; during IL-1 signaling. Identified in the TRIKA2 complex composed of MAP3K7, TAB1 and TAB2. Interacts with TRAF6 and MAPK14; these interactions allow MAPK14 autophosphorylation. Interacts with STING1; interaction takes place following cGAMP activation and promotes TAB1 recruitment to the endoplasmic reticulum, triggering MAP3K7/TAK1 activation and STING1 phosphorylation. Post-translationally, phosphorylated at all three sites Ser-423, Thr-431 and Ser-438 by MAPK14 when cells were exposed to cellular stresses, or stimulated with TNF-alpha, IL1 or LPS. These phosphorylations inhibit TAK1 activation by a feedback control mechanism. Dephosphorylated by DUSP14 at Ser-438, leading to TAB1-MAP3K7/TAK1 complex inactivation in T-cells. In terms of processing, ubiquitinated by MAP3K1 with 'Lys-63'-linked polyubiquitin; leading to activation of TAK1 and of JNK and p38 MAP kinases following EGF and TGF-beta stimulation. Ubiquitinated by ITCH with 'Lys-48'-linked polyubiquitin; leading to proteasomal degradation. Ubiquitinated by RNF114 during maternal-to-zygotic transition; leading to degradation. (Microbial infection) Deubiquitinated by Y.enterocolitica YopP. Post-translationally, O-GlcNAcylated at Ser-395 by OGT is required for full MAP3K7/TAK1 activation upon stimulation with IL-1 or osmotic stress. Deglycosylated at Ser-395 by OGA. In terms of tissue distribution, ubiquitous.

The protein localises to the cytoplasm. It is found in the cytosol. It localises to the endoplasmic reticulum membrane. Key adapter protein that plays an essential role in JNK and NF-kappa-B activation and proinflammatory cytokines production in response to stimulation with TLRs and cytokines. Mechanistically, associates with the catalytic domain of MAP3K7/TAK1 to trigger MAP3K7/TAK1 autophosphorylation leading to its full activation. Similarly, associates with MAPK14 and triggers its autophosphorylation and subsequent activation. In turn, MAPK14 phosphorylates TAB1 and inhibits MAP3K7/TAK1 activation in a feedback control mechanism. Also plays a role in recruiting MAPK14 to the TAK1 complex for the phosphorylation of the TAB2 and TAB3 regulatory subunits. The polypeptide is TGF-beta-activated kinase 1 and MAP3K7-binding protein 1 (TAB1) (Homo sapiens (Human)).